A 287-amino-acid chain; its full sequence is BURP domain-containing protein 2 (287 aa).

The N-terminal stretch at 1–21 (MARSLAALLLLLVAAAGASHA) is a signal peptide. The region spanning 67–287 (FFLEKDLFPG…PQDDMLWVRN (221 aa)) is the BURP domain.

As to expression, expressed in shoot.

The protein is BURP domain-containing protein 2 (BURP2) of Oryza sativa subsp. japonica (Rice).